The chain runs to 135 residues: Large ribosomal subunit protein uL18 (135 aa).

The tract at residues 1–25 is disordered; the sequence is MAQTENQKSKRIPLGKDVSTQRRLS.

The protein belongs to the universal ribosomal protein uL18 family. As to quaternary structure, part of the 50S ribosomal subunit; part of the 5S rRNA/L5/L18/L25 subcomplex. Contacts the 5S and 23S rRNAs.

This is one of the proteins that bind and probably mediate the attachment of the 5S RNA into the large ribosomal subunit, where it forms part of the central protuberance. The polypeptide is Large ribosomal subunit protein uL18 (Nocardia farcinica (strain IFM 10152)).